The primary structure comprises 291 residues: MNWFTKLLPKISTANKKGVPEGVWHKCPSCTAVLYRVELERNLEVCPKCYYHIRLDPRKRLAQFLDEGEQEELAEDILPVDRLKFRDSKKYKDRLSAAQKATEEKEALVVYKGNIYGNPIVAAAFNFFFVGGSMGAAVGERFAAGVEAAISERLPFVCFSTSGGARMQEGLFSLFQMAKTSAVLARLAEYKLPYISVLTDPTMGGVSASLAMLGDVIIAEPNALIGFSGPRVIEQTIRQTLPEGFQRSEFLLEHGAIDMVVDRRELKSTIASLITKLTHQPPPDLPVEESV.

The 269-residue stretch at 23 to 291 (VWHKCPSCTA…PPDLPVEESV (269 aa)) folds into the CoA carboxyltransferase N-terminal domain. Positions 27, 30, 46, and 49 each coordinate Zn(2+). A C4-type zinc finger spans residues 27–49 (CPSCTAVLYRVELERNLEVCPKC).

Belongs to the AccD/PCCB family. As to quaternary structure, acetyl-CoA carboxylase is a heterohexamer composed of biotin carboxyl carrier protein (AccB), biotin carboxylase (AccC) and two subunits each of ACCase subunit alpha (AccA) and ACCase subunit beta (AccD). Requires Zn(2+) as cofactor.

It is found in the cytoplasm. It catalyses the reaction N(6)-carboxybiotinyl-L-lysyl-[protein] + acetyl-CoA = N(6)-biotinyl-L-lysyl-[protein] + malonyl-CoA. The protein operates within lipid metabolism; malonyl-CoA biosynthesis; malonyl-CoA from acetyl-CoA: step 1/1. Functionally, component of the acetyl coenzyme A carboxylase (ACC) complex. Biotin carboxylase (BC) catalyzes the carboxylation of biotin on its carrier protein (BCCP) and then the CO(2) group is transferred by the transcarboxylase to acetyl-CoA to form malonyl-CoA. In Coxiella burnetii (strain RSA 331 / Henzerling II), this protein is Acetyl-coenzyme A carboxylase carboxyl transferase subunit beta.